Here is a 475-residue protein sequence, read N- to C-terminus: Ribulose bisphosphate carboxylase large chain (475 aa).

Positions 1 to 2 are excised as a propeptide; that stretch reads MS. The residue at position 3 (Pro3) is an N-acetylproline. Lys14 carries the post-translational modification N6,N6,N6-trimethyllysine. Asn123 and Thr173 together coordinate substrate. The active-site Proton acceptor is Lys175. Lys177 contributes to the substrate binding site. The Mg(2+) site is built by Lys201, Asp203, and Glu204. Lys201 carries the N6-carboxylysine modification. Residue His294 is the Proton acceptor of the active site. Substrate-binding residues include Arg295, His327, and Ser379.

The protein belongs to the RuBisCO large chain family. Type I subfamily. Heterohexadecamer of 8 large chains and 8 small chains; disulfide-linked. The disulfide link is formed within the large subunit homodimers. The cofactor is Mg(2+). In terms of processing, the disulfide bond which can form in the large chain dimeric partners within the hexadecamer appears to be associated with oxidative stress and protein turnover.

The protein localises to the plastid. It localises to the chloroplast. The catalysed reaction is 2 (2R)-3-phosphoglycerate + 2 H(+) = D-ribulose 1,5-bisphosphate + CO2 + H2O. It catalyses the reaction D-ribulose 1,5-bisphosphate + O2 = 2-phosphoglycolate + (2R)-3-phosphoglycerate + 2 H(+). RuBisCO catalyzes two reactions: the carboxylation of D-ribulose 1,5-bisphosphate, the primary event in carbon dioxide fixation, as well as the oxidative fragmentation of the pentose substrate in the photorespiration process. Both reactions occur simultaneously and in competition at the same active site. This Quercus rubra (Northern red oak) protein is Ribulose bisphosphate carboxylase large chain.